Reading from the N-terminus, the 225-residue chain is Uridylate kinase (225 aa).

An ATP-binding site is contributed by 9–10 (GS). Gly-46 contributes to the UMP binding site. ATP-binding residues include Gly-47 and Arg-51. UMP contacts are provided by residues Asp-67 and 115-121 (THPAHTT). ATP contacts are provided by Thr-141, Asn-142, Tyr-147, and Asp-150.

This sequence belongs to the UMP kinase family. Homohexamer.

It localises to the cytoplasm. The catalysed reaction is UMP + ATP = UDP + ADP. It functions in the pathway pyrimidine metabolism; CTP biosynthesis via de novo pathway; UDP from UMP (UMPK route): step 1/1. With respect to regulation, inhibited by UTP. Catalyzes the reversible phosphorylation of UMP to UDP. This Methanococcus vannielii (strain ATCC 35089 / DSM 1224 / JCM 13029 / OCM 148 / SB) protein is Uridylate kinase.